Here is a 294-residue protein sequence, read N- to C-terminus: Protease HtpX homolog 2 (294 aa).

2 helical membrane passes run 15–35 (MLFT…FLSY) and 37–57 (GTPP…QYFY). H140 serves as a coordination point for Zn(2+). E141 is an active-site residue. H144 contacts Zn(2+). 2 helical membrane-spanning segments follow: residues 151–171 (AVLT…RYSL) and 185–205 (GGIL…FLLI). Residue E213 coordinates Zn(2+).

It belongs to the peptidase M48B family. Zn(2+) is required as a cofactor.

It localises to the cell membrane. This chain is Protease HtpX homolog 2, found in Methanosarcina acetivorans (strain ATCC 35395 / DSM 2834 / JCM 12185 / C2A).